Here is a 398-residue protein sequence, read N- to C-terminus: Candidapepsin-3 (398 aa).

The first 18 residues, methionine 1 to alanine 18, serve as a signal peptide directing secretion. Residues threonine 19–arginine 58 constitute a propeptide, activation peptide. An N-linked (GlcNAc...) asparagine glycan is attached at asparagine 42. The Peptidase A1 domain maps to tyrosine 72–alanine 384. The active site involves aspartate 90. Aspartate 90–glycine 92 lines the pepstatin A pocket. Residues valine 103–aspartate 112 show a composition bias toward polar residues. Residues valine 103 to isoleucine 139 form a disordered region. A disulfide bond links cysteine 105 and cysteine 116. Over residues serine 123–serine 138 the composition is skewed to low complexity. Residues glutamate 140 to aspartate 143 and aspartate 274 to threonine 278 contribute to the pepstatin A site. The active site involves aspartate 274. A disulfide bridge links cysteine 312 with cysteine 350. N-linked (GlcNAc...) asparagine glycosylation is present at asparagine 313.

This sequence belongs to the peptidase A1 family. O-glycosylated.

Its subcellular location is the secreted. The enzyme catalyses Preferential cleavage at the carboxyl of hydrophobic amino acids, but fails to cleave 15-Leu-|-Tyr-16, 16-Tyr-|-Leu-17 and 24-Phe-|-Phe-25 of insulin B chain. Activates trypsinogen, and degrades keratin.. The protein is Candidapepsin-3 (SAP3) of Candida albicans (strain WO-1) (Yeast).